Consider the following 190-residue polypeptide: Pyridoxal 5'-phosphate synthase subunit PdxT (190 aa).

An L-glutamine-binding site is contributed by 46–48 (GES). Residue C78 is the Nucleophile of the active site. Residues R105 and 133-134 (IR) contribute to the L-glutamine site. Catalysis depends on charge relay system residues H169 and E171.

The protein belongs to the glutaminase PdxT/SNO family. In the presence of PdxS, forms a dodecamer of heterodimers. Only shows activity in the heterodimer.

It catalyses the reaction aldehydo-D-ribose 5-phosphate + D-glyceraldehyde 3-phosphate + L-glutamine = pyridoxal 5'-phosphate + L-glutamate + phosphate + 3 H2O + H(+). The catalysed reaction is L-glutamine + H2O = L-glutamate + NH4(+). Its pathway is cofactor biosynthesis; pyridoxal 5'-phosphate biosynthesis. Catalyzes the hydrolysis of glutamine to glutamate and ammonia as part of the biosynthesis of pyridoxal 5'-phosphate. The resulting ammonia molecule is channeled to the active site of PdxS. This is Pyridoxal 5'-phosphate synthase subunit PdxT from Niallia circulans (Bacillus circulans).